Here is a 111-residue protein sequence, read N- to C-terminus: Cell division topological specificity factor (111 aa).

The protein belongs to the MinE family.

Functionally, prevents the cell division inhibition by proteins MinC and MinD at internal division sites while permitting inhibition at polar sites. This ensures cell division at the proper site by restricting the formation of a division septum at the midpoint of the long axis of the cell. This Prochlorococcus marinus (strain MIT 9312) protein is Cell division topological specificity factor.